A 508-amino-acid polypeptide reads, in one-letter code: Light-independent protochlorophyllide reductase subunit B (508 aa).

A [4Fe-4S] cluster-binding site is contributed by Asp-36. The active-site Proton donor is the Asp-294. Residue 429–430 (GM) participates in substrate binding.

Belongs to the ChlB/BchB/BchZ family. Protochlorophyllide reductase is composed of three subunits; ChlL, ChlN and ChlB. Forms a heterotetramer of two ChlB and two ChlN subunits. [4Fe-4S] cluster is required as a cofactor.

It catalyses the reaction chlorophyllide a + oxidized 2[4Fe-4S]-[ferredoxin] + 2 ADP + 2 phosphate = protochlorophyllide a + reduced 2[4Fe-4S]-[ferredoxin] + 2 ATP + 2 H2O. The protein operates within porphyrin-containing compound metabolism; chlorophyll biosynthesis (light-independent). In terms of biological role, component of the dark-operative protochlorophyllide reductase (DPOR) that uses Mg-ATP and reduced ferredoxin to reduce ring D of protochlorophyllide (Pchlide) to form chlorophyllide a (Chlide). This reaction is light-independent. The NB-protein (ChlN-ChlB) is the catalytic component of the complex. This Synechocystis sp. (strain ATCC 27184 / PCC 6803 / Kazusa) protein is Light-independent protochlorophyllide reductase subunit B.